Consider the following 165-residue polypeptide: Deoxyuridine 5'-triphosphate nucleotidohydrolase (165 aa).

It belongs to the dUTPase family. As to quaternary structure, homotrimer. Mg(2+) serves as cofactor.

The protein resides in the host cytoplasm. It localises to the virion. The enzyme catalyses dUTP + H2O = dUMP + diphosphate + H(+). In terms of biological role, the viral dUTPase may play a role in lowering the dUTP concentration in natural infections to minimize misincorporation of deoxyuridine into the viral DNA and ensure the fidelity of genome replication. This is Deoxyuridine 5'-triphosphate nucleotidohydrolase from African swine fever virus (isolate Tick/South Africa/Pretoriuskop Pr4/1996) (ASFV).